The primary structure comprises 100 residues: Succinate dehydrogenase subunit 7B, mitochondrial (100 aa).

Residues M1 to A25 form a disordered region. The N-terminal 32 residues, M1–G32, are a transit peptide targeting the mitochondrion. The segment covering S9–S19 has biased composition (low complexity).

As to quaternary structure, component of complex II composed of eight subunits in plants: four classical SDH subunits SDH1, SDH2, SDH3 and SDH4 (a flavoprotein (FP), an iron-sulfur protein (IP), and a cytochrome b composed of a large and a small subunit.), as well as four subunits unknown in mitochondria from bacteria and heterotrophic eukaryotes.

It localises to the mitochondrion inner membrane. Its pathway is carbohydrate metabolism; tricarboxylic acid cycle. The polypeptide is Succinate dehydrogenase subunit 7B, mitochondrial (Arabidopsis thaliana (Mouse-ear cress)).